The following is a 108-amino-acid chain: Phosphoribosyl-AMP cyclohydrolase (108 aa).

Asp-72 contacts Mg(2+). Cys-73 serves as a coordination point for Zn(2+). Residues Asp-74 and Asp-76 each contribute to the Mg(2+) site. Zn(2+) contacts are provided by Cys-89 and Cys-96.

The protein belongs to the PRA-CH family. In terms of assembly, homodimer. Mg(2+) serves as cofactor. It depends on Zn(2+) as a cofactor.

Its subcellular location is the cytoplasm. The catalysed reaction is 1-(5-phospho-beta-D-ribosyl)-5'-AMP + H2O = 1-(5-phospho-beta-D-ribosyl)-5-[(5-phospho-beta-D-ribosylamino)methylideneamino]imidazole-4-carboxamide. It participates in amino-acid biosynthesis; L-histidine biosynthesis; L-histidine from 5-phospho-alpha-D-ribose 1-diphosphate: step 3/9. Catalyzes the hydrolysis of the adenine ring of phosphoribosyl-AMP. The chain is Phosphoribosyl-AMP cyclohydrolase from Archaeoglobus fulgidus (strain ATCC 49558 / DSM 4304 / JCM 9628 / NBRC 100126 / VC-16).